Consider the following 312-residue polypeptide: Glyoxylate/hydroxypyruvate reductase A (312 aa).

R227 is a catalytic residue. The Proton donor role is filled by H275.

It belongs to the D-isomer specific 2-hydroxyacid dehydrogenase family. GhrA subfamily.

It localises to the cytoplasm. The catalysed reaction is glycolate + NADP(+) = glyoxylate + NADPH + H(+). It catalyses the reaction (R)-glycerate + NAD(+) = 3-hydroxypyruvate + NADH + H(+). The enzyme catalyses (R)-glycerate + NADP(+) = 3-hydroxypyruvate + NADPH + H(+). In terms of biological role, catalyzes the NADPH-dependent reduction of glyoxylate and hydroxypyruvate into glycolate and glycerate, respectively. In Escherichia coli O7:K1 (strain IAI39 / ExPEC), this protein is Glyoxylate/hydroxypyruvate reductase A.